The sequence spans 369 residues: Anhydro-N-acetylmuramic acid kinase (369 aa).

12 to 19 is a binding site for ATP; it reads GTSMDGVD.

The protein belongs to the anhydro-N-acetylmuramic acid kinase family.

It carries out the reaction 1,6-anhydro-N-acetyl-beta-muramate + ATP + H2O = N-acetyl-D-muramate 6-phosphate + ADP + H(+). It functions in the pathway amino-sugar metabolism; 1,6-anhydro-N-acetylmuramate degradation. The protein operates within cell wall biogenesis; peptidoglycan recycling. Its function is as follows. Catalyzes the specific phosphorylation of 1,6-anhydro-N-acetylmuramic acid (anhMurNAc) with the simultaneous cleavage of the 1,6-anhydro ring, generating MurNAc-6-P. Is required for the utilization of anhMurNAc either imported from the medium or derived from its own cell wall murein, and thus plays a role in cell wall recycling. This Shewanella sp. (strain MR-7) protein is Anhydro-N-acetylmuramic acid kinase.